The primary structure comprises 549 residues: Probable protein kinase UbiB (549 aa).

Positions 123-504 constitute a Protein kinase domain; the sequence is DFDETALASA…QRNNTGFSRL (382 aa). ATP is bound by residues 129 to 137 and Lys-156; that span reads LASASIAQV. Asp-291 acts as the Proton acceptor in catalysis. A helical membrane pass occupies residues 505–525; that stretch reads MILGIAIAGTFWKFEMLPLWV.

This sequence belongs to the ABC1 family. UbiB subfamily.

The protein localises to the cell inner membrane. Its pathway is cofactor biosynthesis; ubiquinone biosynthesis [regulation]. Its function is as follows. Is probably a protein kinase regulator of UbiI activity which is involved in aerobic coenzyme Q (ubiquinone) biosynthesis. The protein is Probable protein kinase UbiB of Glaesserella parasuis serovar 5 (strain SH0165) (Haemophilus parasuis).